A 321-amino-acid polypeptide reads, in one-letter code: Homoserine O-acetyltransferase (321 aa).

The Acyl-thioester intermediate role is filled by Cys142. Substrate-binding residues include Lys163 and Ser192. Residue His235 is the Proton acceptor of the active site. Residue Glu237 is part of the active site. Residue Arg249 coordinates substrate.

Belongs to the MetA family.

The protein resides in the cytoplasm. It carries out the reaction L-homoserine + acetyl-CoA = O-acetyl-L-homoserine + CoA. Its pathway is amino-acid biosynthesis; L-methionine biosynthesis via de novo pathway; O-acetyl-L-homoserine from L-homoserine: step 1/1. In terms of biological role, transfers an acetyl group from acetyl-CoA to L-homoserine, forming acetyl-L-homoserine. The polypeptide is Homoserine O-acetyltransferase (Lactococcus lactis subsp. lactis (strain IL1403) (Streptococcus lactis)).